A 323-amino-acid chain; its full sequence is Beta-ketoacyl-[acyl-carrier-protein] synthase III (323 aa).

Active-site residues include C113 and H250. Positions 251–255 (QANKR) are ACP-binding. N280 is a catalytic residue.

This sequence belongs to the thiolase-like superfamily. FabH family. Homodimer.

The protein localises to the cytoplasm. The catalysed reaction is malonyl-[ACP] + acetyl-CoA + H(+) = 3-oxobutanoyl-[ACP] + CO2 + CoA. Its pathway is lipid metabolism; fatty acid biosynthesis. Its function is as follows. Catalyzes the condensation reaction of fatty acid synthesis by the addition to an acyl acceptor of two carbons from malonyl-ACP. Catalyzes the first condensation reaction which initiates fatty acid synthesis and may therefore play a role in governing the total rate of fatty acid production. Possesses both acetoacetyl-ACP synthase and acetyl transacylase activities. Its substrate specificity determines the biosynthesis of branched-chain and/or straight-chain of fatty acids. The polypeptide is Beta-ketoacyl-[acyl-carrier-protein] synthase III (Agrobacterium fabrum (strain C58 / ATCC 33970) (Agrobacterium tumefaciens (strain C58))).